Consider the following 165-residue polypeptide: Protein C2-DOMAIN ABA-RELATED 7 (165 aa).

Met-1 carries the N-acetylmethionine modification. Positions 1–106 (MEELVGLLRI…HKMGLQELPD (106 aa)) constitute a C2 domain. Ca(2+) is bound by residues Arg-21, Asp-22, Asp-27, Asp-73, Lys-74, Asp-75, and Asp-81.

It belongs to the plant CAR protein family. In terms of assembly, binds to PYR/PYL/RCAR abscisic acid intracellular receptors in an ABA-independent manner, both at the plasma membrane and in the nucleus.

It localises to the cell membrane. The protein resides in the nucleus. Its function is as follows. Stimulates the GTPase/ATPase activities of Obg-like ATPases. Mediates the transient calcium-dependent interaction of PYR/PYL/RCAR abscisic acid (ABA) receptors with the plasma membrane and thus regulates ABA sensitivity. This chain is Protein C2-DOMAIN ABA-RELATED 7, found in Arabidopsis thaliana (Mouse-ear cress).